The primary structure comprises 518 residues: 3-octaprenyl-4-hydroxybenzoate carboxy-lyase (518 aa).

N177 is a Mn(2+) binding site. Prenylated FMN-binding positions include I180–R182, R194–L196, and R199–G200. Mn(2+) is bound at residue E243. Catalysis depends on D318, which acts as the Proton donor.

This sequence belongs to the UbiD family. In terms of assembly, homohexamer. Prenylated FMN serves as cofactor. It depends on Mn(2+) as a cofactor.

Its subcellular location is the cell membrane. It carries out the reaction a 4-hydroxy-3-(all-trans-polyprenyl)benzoate + H(+) = a 2-(all-trans-polyprenyl)phenol + CO2. The protein operates within cofactor biosynthesis; ubiquinone biosynthesis. Functionally, catalyzes the decarboxylation of 3-octaprenyl-4-hydroxy benzoate to 2-octaprenylphenol, an intermediate step in ubiquinone biosynthesis. This chain is 3-octaprenyl-4-hydroxybenzoate carboxy-lyase, found in Burkholderia orbicola (strain AU 1054).